Here is a 536-residue protein sequence, read N- to C-terminus: Pre-mRNA-splicing regulator female-lethal(2)D (536 aa).

Residues 1–91 (MSVAAMTMDD…LQQQQQQQQQ (91 aa)) form a disordered region. Positions 28-39 (QNLNILNSSQNS) are enriched in low complexity. The span at 57-69 (HHHHHPHPHHHHH) shows a compositional bias: basic residues. Low complexity predominate over residues 72–91 (QQQQQQQQQHLQQQQQQQQQ). Residues 254–319 (KSFSEEVKKS…KQAIKDEVVA (66 aa)) are a coiled coil. Positions 424–450 (APRTLPPKKSKLRGITTRRNSQLEEDH) are disordered.

This sequence belongs to the fl(2)d family. Component of the WMM complex, a N6-methyltransferase complex composed of a catalytic subcomplex, named MAC, and of an associated subcomplex, named MACOM. The MAC subcomplex is composed of Ime4/Mettl3 and Mettl14. The MACOM subcomplex is composed of fl(2)d, Flacc/Xio, Hakai, vir, and, in some cases of nito. Interacts with vir and msk. Part of a complex containing fl(2)d, Sxl and vir.

The protein localises to the nucleus. Its function is as follows. Associated component of the WMM complex, a complex that mediates N6-methyladenosine (m6A) methylation of mRNAs, a modification that plays a role in the efficiency of mRNA splicing and is required for sex determination. Required for sex determination and dosage compensation via Sxl alternative splicing: m6A methylation acts as a key regulator of Sxl pre-mRNA and promotes female-specific alternative splicing of Sxl, which determines female physiognomy. M6A methylation is also required for neuronal functions. Required for proper inclusion of regulated exons in Ubx transcripts, leading to isoforms Ia/b and IIa/b. This Drosophila melanogaster (Fruit fly) protein is Pre-mRNA-splicing regulator female-lethal(2)D.